Consider the following 714-residue polypeptide: MSGNDEAAAAGVAPPQTLQFAPFESQIEMPFYSALFSRKLDHDKLDDSVRPVIGLYQPMSERPPAESTRMQIQGGALSSSHVPMGYTRADGSIRNFNTIEDFKKADKGAILRQAGAQIWDAIKDGSIYEIPSLLSSFAILSYADLKKYRFTYWFAYPTLHSVPAWRRDGPLARFSSKETTALVNEVGTFRYAHDTRQHGFFLAKKVPYRSGPFRRGLPRDDSDGDDIGFTWSIGALGEFEKGFFKGIKEEDQYIAFVDSSSYAENPSWPLRNLLVLIRQRFQLQKANILCYRDTQARRDEPRSIVLPLASEGPATPQTSEMPKVTGWERHPSSKLQARVISLAEYMDPTRIADQAVDLNLKLMKWRISPKLDLEAMRSLKCLLLGAGTLGSYVSRNLMGWGVRKITFVDYGNVSFSNPVRQPLFEFEDCLSGGVPKAPKAAEALKKINPGVEAEGHVLSVPMLGHPVLNEAQTKEDFEKLQQLIKAHDVVFLLMDTRESRWLPTVMGKAEGKIVMNAALGFDTYVVMRHGAAPKDGTESTLGCYFCNDVVAPSDSMKDQTLDQQCTVTRPGVAAIASAMLVEMLTSVLQHPQREHAPAPKATGPPGNPEYQRDPPDHALGIVPHQVRGFLANFQNMIISGESYPNCSACSSPIVGAYKSDGWEFVKKALSDKDYVLELSGLAEVQRQAEAMQNEVDWDEDEDVAAAEEGDGEML.

Residues 380–390 (KCLLLGAGTLG) carry the GXGXXG motif motif. C565 acts as the Glycyl thioester intermediate in catalysis. Disordered stretches follow at residues 591-616 (PQRE…DPPD) and 691-714 (MQNE…GEML). Acidic residues predominate over residues 695 to 714 (VDWDEDEDVAAAEEGDGEML).

It belongs to the ATG7 family. Homodimer.

The protein localises to the cytoplasm. The protein resides in the preautophagosomal structure. In terms of biological role, E1-like activating enzyme involved in the 2 ubiquitin-like systems required for cytoplasm to vacuole transport (Cvt) and autophagy. Activates ATG12 for its conjugation with ATG5 and ATG8 for its conjugation with phosphatidylethanolamine. Both systems are needed for the ATG8 association to Cvt vesicles and autophagosomes membranes. Autophagy is essential for maintenance of amino acid levels and protein synthesis under nitrogen starvation. Required for selective autophagic degradation of the nucleus (nucleophagy) as well as for mitophagy which contributes to regulate mitochondrial quantity and quality by eliminating the mitochondria to a basal level to fulfill cellular energy requirements and preventing excess ROS production. Plays a role in the regulation of filamentous growth and chronological longevity. The sequence is that of Ubiquitin-like modifier-activating enzyme ATG7 (ATG7) from Pyricularia oryzae (strain 70-15 / ATCC MYA-4617 / FGSC 8958) (Rice blast fungus).